The chain runs to 131 residues: Translation initiation factor 5A (131 aa).

Position 37 is a hypusine (lysine 37).

Belongs to the eIF-5A family.

Its subcellular location is the cytoplasm. Functionally, functions by promoting the formation of the first peptide bond. In Methanococcus maripaludis (strain C7 / ATCC BAA-1331), this protein is Translation initiation factor 5A (eIF5A).